Consider the following 263-residue polypeptide: Chromosomal replication initiator protein DnaA (263 aa).

A region of interest (domain I, interacts with DnaA modulators) is located at residue Asp1. Residue Asp1 is a region of interest, domain II. The segment at 1 to 177 is domain III, AAA+ region; that stretch reads DSGLGKTHLL…GIINKIEFSI (177 aa). The ATP site is built by Gly3, Gly5, Lys6, and Thr7. The domain IV, binds dsDNA stretch occupies residues 178 to 263; it reads IQDNSAAPKI…KNYSEIGVAF (86 aa).

It belongs to the DnaA family. As to quaternary structure, oligomerizes as a right-handed, spiral filament on DNA at oriC.

Its subcellular location is the cytoplasm. Functionally, plays an essential role in the initiation and regulation of chromosomal replication. ATP-DnaA binds to the origin of replication (oriC) to initiate formation of the DNA replication initiation complex once per cell cycle. Binds the DnaA box (a 9 base pair repeat at the origin) and separates the double-stranded (ds)DNA. Forms a right-handed helical filament on oriC DNA; dsDNA binds to the exterior of the filament while single-stranded (ss)DNA is stabiized in the filament's interior. The ATP-DnaA-oriC complex binds and stabilizes one strand of the AT-rich DNA unwinding element (DUE), permitting loading of DNA polymerase. After initiation quickly degrades to an ADP-DnaA complex that is not apt for DNA replication. Binds acidic phospholipids. This chain is Chromosomal replication initiator protein DnaA, found in Spiroplasma apis.